Consider the following 193-residue polypeptide: Orotate phosphoribosyltransferase (193 aa).

Residues Arg-107, Lys-108, Lys-111, His-113, and 133-141 (EDVITSGGS) each bind 5-phospho-alpha-D-ribose 1-diphosphate. Residues Thr-137 and Arg-165 each coordinate orotate.

It belongs to the purine/pyrimidine phosphoribosyltransferase family. PyrE subfamily. In terms of assembly, homodimer. It depends on Mg(2+) as a cofactor.

The catalysed reaction is orotidine 5'-phosphate + diphosphate = orotate + 5-phospho-alpha-D-ribose 1-diphosphate. Its pathway is pyrimidine metabolism; UMP biosynthesis via de novo pathway; UMP from orotate: step 1/2. Its function is as follows. Catalyzes the transfer of a ribosyl phosphate group from 5-phosphoribose 1-diphosphate to orotate, leading to the formation of orotidine monophosphate (OMP). The polypeptide is Orotate phosphoribosyltransferase (Rhodopirellula baltica (strain DSM 10527 / NCIMB 13988 / SH1)).